Reading from the N-terminus, the 177-residue chain is Putative peroxiredoxin (177 aa).

Residues threonine 8–valine 177 enclose the Thioredoxin domain. The active-site Cysteine sulfenic acid (-SOH) intermediate is cysteine 64. A Microbody targeting signal motif is present at residues threonine 175–valine 177.

It belongs to the peroxiredoxin family. Prx5 subfamily. As to quaternary structure, homodimer; disulfide-linked, upon oxidation.

It carries out the reaction a hydroperoxide + [thioredoxin]-dithiol = an alcohol + [thioredoxin]-disulfide + H2O. Its function is as follows. Thiol-specific peroxidase that catalyzes the reduction of hydrogen peroxide and organic hydroperoxides to water and alcohols, respectively. Plays a role in cell protection against oxidative stress by detoxifying peroxides and as sensor of hydrogen peroxide-mediated signaling events. This is Putative peroxiredoxin from Malassezia furfur (Pityriasis versicolor infection agent).